A 480-amino-acid polypeptide reads, in one-letter code: Protein nucleotidyltransferase YdiU (480 aa).

ATP is bound by residues glycine 86, glycine 88, arginine 89, lysine 109, aspartate 121, glycine 122, arginine 172, and arginine 179. Aspartate 248 functions as the Proton acceptor in the catalytic mechanism. Residues asparagine 249 and aspartate 258 each contribute to the Mg(2+) site. Aspartate 258 serves as a coordination point for ATP.

The protein belongs to the SELO family. It depends on Mg(2+) as a cofactor. Requires Mn(2+) as cofactor.

It catalyses the reaction L-seryl-[protein] + ATP = 3-O-(5'-adenylyl)-L-seryl-[protein] + diphosphate. It carries out the reaction L-threonyl-[protein] + ATP = 3-O-(5'-adenylyl)-L-threonyl-[protein] + diphosphate. The catalysed reaction is L-tyrosyl-[protein] + ATP = O-(5'-adenylyl)-L-tyrosyl-[protein] + diphosphate. The enzyme catalyses L-histidyl-[protein] + UTP = N(tele)-(5'-uridylyl)-L-histidyl-[protein] + diphosphate. It catalyses the reaction L-seryl-[protein] + UTP = O-(5'-uridylyl)-L-seryl-[protein] + diphosphate. It carries out the reaction L-tyrosyl-[protein] + UTP = O-(5'-uridylyl)-L-tyrosyl-[protein] + diphosphate. In terms of biological role, nucleotidyltransferase involved in the post-translational modification of proteins. It can catalyze the addition of adenosine monophosphate (AMP) or uridine monophosphate (UMP) to a protein, resulting in modifications known as AMPylation and UMPylation. The protein is Protein nucleotidyltransferase YdiU of Salmonella newport (strain SL254).